A 414-amino-acid polypeptide reads, in one-letter code: Translation initiation factor 2 subunit gamma (414 aa).

Residues 7 to 204 (QPEVNIGLVG…ALQTEIATPD (198 aa)) form the tr-type G domain. Residues 16-23 (GHVDHGKT) form a G1 region. Positions 19, 23, 44, and 46 each coordinate Mg(2+). 19-24 (DHGKTT) contributes to the GTP binding site. The segment at 44 to 48 (GISIR) is G2. Residues 91 to 94 (DAPG) form a G3 region. GTP-binding positions include 147-150 (NKVD) and 182-184 (SAE). The G4 stretch occupies residues 147–150 (NKVD). A G5 region spans residues 182 to 184 (SAE).

This sequence belongs to the TRAFAC class translation factor GTPase superfamily. Classic translation factor GTPase family. EIF2G subfamily. In terms of assembly, heterotrimer composed of an alpha, a beta and a gamma chain. The cofactor is Mg(2+).

The enzyme catalyses GTP + H2O = GDP + phosphate + H(+). Functionally, eIF-2 functions in the early steps of protein synthesis by forming a ternary complex with GTP and initiator tRNA. The chain is Translation initiation factor 2 subunit gamma from Halobacterium salinarum (strain ATCC 29341 / DSM 671 / R1).